A 434-amino-acid polypeptide reads, in one-letter code: ATP phosphoribosyltransferase regulatory subunit (434 aa).

The disordered stretch occupies residues 1–48 (MYGRGSGAEHSRGSGAEHFWDPRPEASSTVSSSLRPPSGARDLLPREV). Over residues 27–38 (SSTVSSSLRPPS) the composition is skewed to low complexity.

This sequence belongs to the class-II aminoacyl-tRNA synthetase family. HisZ subfamily. Heteromultimer composed of HisG and HisZ subunits.

The protein resides in the cytoplasm. It functions in the pathway amino-acid biosynthesis; L-histidine biosynthesis; L-histidine from 5-phospho-alpha-D-ribose 1-diphosphate: step 1/9. Required for the first step of histidine biosynthesis. May allow the feedback regulation of ATP phosphoribosyltransferase activity by histidine. The polypeptide is ATP phosphoribosyltransferase regulatory subunit (Synechococcus sp. (strain JA-2-3B'a(2-13)) (Cyanobacteria bacterium Yellowstone B-Prime)).